We begin with the raw amino-acid sequence, 238 residues long: 2-C-methyl-D-erythritol 4-phosphate cytidylyltransferase (238 aa).

This sequence belongs to the IspD/TarI cytidylyltransferase family. IspD subfamily.

The enzyme catalyses 2-C-methyl-D-erythritol 4-phosphate + CTP + H(+) = 4-CDP-2-C-methyl-D-erythritol + diphosphate. It functions in the pathway isoprenoid biosynthesis; isopentenyl diphosphate biosynthesis via DXP pathway; isopentenyl diphosphate from 1-deoxy-D-xylulose 5-phosphate: step 2/6. Catalyzes the formation of 4-diphosphocytidyl-2-C-methyl-D-erythritol from CTP and 2-C-methyl-D-erythritol 4-phosphate (MEP). The polypeptide is 2-C-methyl-D-erythritol 4-phosphate cytidylyltransferase (Acinetobacter baumannii (strain AYE)).